The chain runs to 61 residues: Small ribosomal subunit protein uS14 (61 aa).

Zn(2+) is bound by residues cysteine 24, cysteine 27, cysteine 40, and cysteine 43.

It belongs to the universal ribosomal protein uS14 family. Zinc-binding uS14 subfamily. Part of the 30S ribosomal subunit. Contacts proteins S3 and S10. Zn(2+) is required as a cofactor.

In terms of biological role, binds 16S rRNA, required for the assembly of 30S particles and may also be responsible for determining the conformation of the 16S rRNA at the A site. In Lachnospira eligens (strain ATCC 27750 / DSM 3376 / VPI C15-48 / C15-B4) (Eubacterium eligens), this protein is Small ribosomal subunit protein uS14.